The chain runs to 293 residues: Putative ribose uptake protein RbsU (293 aa).

10 helical membrane-spanning segments follow: residues 5–24, 34–51, 58–80, 95–114, 121–138, 153–170, 177–199, 212–234, 241–263, and 273–292; these read AILI…TIAS, IFGA…LALF, GGMA…IITF, TTAF…LGNW, IIGF…RMTV, SAVI…IYSA, IGGF…IYAL, VSWQ…LISA, LATG…IFFL, and MITI…TVFI.

The protein belongs to the GRP transporter (TC 2.A.7.5) family.

The protein resides in the cell membrane. Could be involved in the uptake of ribose. The protein is Putative ribose uptake protein RbsU (rbsU) of Staphylococcus epidermidis (strain ATCC 35984 / DSM 28319 / BCRC 17069 / CCUG 31568 / BM 3577 / RP62A).